Consider the following 317-residue polypeptide: Melanocyte-stimulating hormone receptor (317 aa).

Over 1–37 (MSVQGPQRRLLGSVNSTSPAAPRLGLAANQTGPRCLE) the chain is Extracellular. 2 N-linked (GlcNAc...) asparagine glycosylation sites follow: Asn15 and Asn29. The helical transmembrane segment at 38-63 (VSVPDGLFLSLGLVSVVENVLVVAAI) threads the bilayer. Topologically, residues 64 to 72 (AKNRNLHSP) are cytoplasmic. Residues 73-93 (MYYFICCLAVSDLLVSVSSVL) form a helical membrane-spanning segment. Over 94–118 (ETAVMLLLEAGTLAGRAAVVQQLDD) the chain is Extracellular. The chain crosses the membrane as a helical span at residues 119–140 (IIDVLVCGAMVSSLCFLGAIAV). Topologically, residues 141–163 (DRYISIFYALRYHSIVTLPRAWR) are cytoplasmic. Residues 164–183 (AISAIWVASVLSSTLFIAYY) form a helical membrane-spanning segment. At 184 to 191 (DHTAVLLC) the chain is on the extracellular side. The chain crosses the membrane as a helical span at residues 192–211 (LVSFFVAMLVLMAVLYVHML). Over 212–240 (ARACQHARGIARLHKRQRPVHQGLGLKGA) the chain is Cytoplasmic. The chain crosses the membrane as a helical span at residues 241-266 (ATLTILLGIFFLCWGPFFLHLSLMVL). The Extracellular segment spans residues 267–279 (CPRHPICGCVFKN). A helical transmembrane segment spans residues 280-300 (FNLFLTLIICNSIVDPLIYAF). The Cytoplasmic portion of the chain corresponds to 301–317 (RSQELRKTLREVLLCSW). The S-palmitoyl cysteine moiety is linked to residue Cys315.

Belongs to the G-protein coupled receptor 1 family. In terms of assembly, interacts with MGRN1, but does not undergo MGRN1-mediated ubiquitination; this interaction competes with GNAS-binding and thus inhibits agonist-induced cAMP production. Interacts with OPN3; the interaction results in a decrease in MC1R-mediated cAMP signaling and ultimately a decrease in melanin production in melanocytes.

It is found in the cell membrane. Its function is as follows. Receptor for MSH (alpha, beta and gamma) and ACTH. The activity of this receptor is mediated by G proteins which activate adenylate cyclase. Mediates melanogenesis, the production of eumelanin (black/brown) and phaeomelanin (red/yellow), via regulation of cAMP signaling in melanocytes. This Puma yagouaroundi (Jaguarundi) protein is Melanocyte-stimulating hormone receptor (MC1R).